A 489-amino-acid polypeptide reads, in one-letter code: Dipeptide and tripeptide permease B (489 aa).

The Cytoplasmic segment spans residues 1 to 27 (MNTTTPMGMLQQPRPFFMIFFVELWER). A helical transmembrane segment spans residues 28–48 (FGYYGVQGVLAVFFVKQLGFS). Residues 49 to 52 (QEQA) are Periplasmic-facing. The helical transmembrane segment at 53–73 (FVTFGAFAALVYGLISIGGYV) threads the bilayer. The Cytoplasmic segment spans residues 74–82 (GDHLLGTKR). Residues 83–103 (TIVLGALVLAIGYFMTGLSLL) form a helical membrane-spanning segment. Residues 104–106 (KPD) are Periplasmic-facing. A helical membrane pass occupies residues 107–127 (LIFIALGTIAVGNGLFKANPA). At 128-146 (SLLSKCYPPKAPRLDGAFT) the chain is on the cytoplasmic side. A helical transmembrane segment spans residues 147–167 (LFYMSINIGSLIALSLAPVIA). The Periplasmic segment spans residues 168–172 (DRFGY). Residues 173–193 (SVTYNLCGAGLIIALLVYIAC) form a helical membrane-spanning segment. Residues 194–210 (RGMVKDIGSEPDFRPMS) lie on the Cytoplasmic side of the membrane. Residues 211 to 231 (FSKLLYVLLGSVVMIFVCAWL) traverse the membrane as a helical segment. Over 232–233 (MH) the chain is Periplasmic. Residues 234–254 (NVEVANLVLIVLSIVVTIIFF) traverse the membrane as a helical segment. Over 255–267 (RQAFKLDKTGRNK) the chain is Cytoplasmic. The helical transmembrane segment at 268–288 (MFVAFVLMLEAVVFYILYAQM) threads the bilayer. Residues 289 to 311 (PTSLNFFAINNVHHEILGFSINP) are Periplasmic-facing. The helical transmembrane segment at 312-332 (VSFQALNPFWVVLASPILAGI) threads the bilayer. Topologically, residues 333 to 350 (YTHLGSKGKDLSMPMKFT) are cytoplasmic. Residues 351-371 (LGMFMCSLGFLTAAAAGMWFA) form a helical membrane-spanning segment. At 372 to 380 (DAQGLTSPW) the chain is on the periplasmic side. The helical transmembrane segment at 381 to 401 (FIVLVYLFQSLGELFISALGL) threads the bilayer. Residues 402 to 411 (AMVAALVPQH) lie on the Cytoplasmic side of the membrane. Residues 412-432 (LMGFILGISFLTQAAAFLLGG) form a helical membrane-spanning segment. The Periplasmic segment spans residues 433 to 456 (YVATFTAVPDNITDPLETLPVYTN). The chain crosses the membrane as a helical span at residues 457–477 (VFGKIGLVTLGVAVVMLLMVP). The Cytoplasmic portion of the chain corresponds to 478–489 (WLKRMIAAPESH).

Belongs to the major facilitator superfamily. Proton-dependent oligopeptide transporter (POT/PTR) (TC 2.A.17) family. DtpB subfamily.

It is found in the cell inner membrane. Its function is as follows. Proton-dependent permease that transports di- and tripeptides. The sequence is that of Dipeptide and tripeptide permease B from Shigella dysenteriae serotype 1 (strain Sd197).